Consider the following 256-residue polypeptide: Thiazole synthase (256 aa).

Residue lysine 95 is the Schiff-base intermediate with DXP of the active site. 1-deoxy-D-xylulose 5-phosphate is bound by residues glycine 156, 182-183, and 204-205; these read AG and NT.

The protein belongs to the ThiG family. As to quaternary structure, homotetramer. Forms heterodimers with either ThiH or ThiS.

The protein resides in the cytoplasm. The enzyme catalyses [ThiS sulfur-carrier protein]-C-terminal-Gly-aminoethanethioate + 2-iminoacetate + 1-deoxy-D-xylulose 5-phosphate = [ThiS sulfur-carrier protein]-C-terminal Gly-Gly + 2-[(2R,5Z)-2-carboxy-4-methylthiazol-5(2H)-ylidene]ethyl phosphate + 2 H2O + H(+). It participates in cofactor biosynthesis; thiamine diphosphate biosynthesis. In terms of biological role, catalyzes the rearrangement of 1-deoxy-D-xylulose 5-phosphate (DXP) to produce the thiazole phosphate moiety of thiamine. Sulfur is provided by the thiocarboxylate moiety of the carrier protein ThiS. In vitro, sulfur can be provided by H(2)S. The polypeptide is Thiazole synthase (Salmonella paratyphi B (strain ATCC BAA-1250 / SPB7)).